The chain runs to 150 residues: Interleukin-17A (150 aa).

Positions 1-17 are cleaved as a signal peptide; it reads MCLMLLLLLNLEATVKA. The interval 54 to 75 is disordered; that stretch reads SSRRPSDYLNRSTSPWTLSRNE. The span at 62–72 shows a compositional bias: polar residues; sequence LNRSTSPWTLS. N63 carries N-linked (GlcNAc...) asparagine glycosylation. 2 disulfide bridges follow: C89–C139 and C94–C141.

This sequence belongs to the IL-17 family. In terms of assembly, homodimer. Forms complexes with IL17RA and IL17RC receptors with 2:1 binding stoichiometry: two receptor chains for one interleukin molecule. IL17A homodimer preferentially drives the formation of IL17RA-IL17RC heterodimeric receptor complex. IL17A homodimer adopts an asymmetrical ternary structure with one IL17RA molecule, allowing for high affinity interactions of one IL17A monomer with one IL17RA molecule (via D1 and D2 domains), while disfavoring binding of a second IL17RA molecule on the other IL17A monomer. Heterodimer with IL17F. IL17A-IL17F forms complexes with IL17RA-IL17RC, but with lower affinity when compared to IL17A homodimer. IL17RA and IL17RC chains cannot distinguish between IL17A and IL17F molecules, potentially enabling the formation of topologically distinct complexes.

It localises to the secreted. Functionally, effector cytokine of innate and adaptive immune system involved in antimicrobial host defense and maintenance of tissue integrity. Signals via IL17RA-IL17RC heterodimeric receptor complex, triggering homotypic interaction of IL17RA and IL17RC chains with TRAF3IP2 adapter. This leads to downstream TRAF6-mediated activation of NF-kappa-B and MAPkinase pathways ultimately resulting in transcriptional activation of cytokines, chemokines, antimicrobial peptides and matrix metalloproteinases, with potential strong immune inflammation. Plays an important role in connecting T cell-mediated adaptive immunity and acute inflammatory response to destroy extracellular bacteria and fungi. As a signature effector cytokine of T-helper 17 cells (Th17), primarily induces neutrophil activation and recruitment at infection and inflammatory sites. In airway epithelium, mediates neutrophil chemotaxis via induction of CXCL1 and CXCL5 chemokines. In secondary lymphoid organs, contributes to germinal center formation by regulating the chemotactic response of B cells to CXCL12 and CXCL13, enhancing retention of B cells within the germinal centers, B cell somatic hypermutation rate and selection toward plasma cells. Effector cytokine of a subset of gamma-delta T cells that functions as part of an inflammatory circuit downstream IL1B, TLR2 and IL23A-IL12B to promote neutrophil recruitment for efficient bacterial clearance. Effector cytokine of innate immune cells including invariant natural killer cell (iNKT) and group 3 innate lymphoid cells that mediate initial neutrophilic inflammation. Involved in the maintenance of the integrity of epithelial barriers during homeostasis and pathogen infection. Upon acute injury, has a direct role in epithelial barrier formation by regulating OCLN localization and tight junction biogenesis. As part of the mucosal immune response induced by commensal bacteria, enhances host's ability to resist pathogenic bacterial and fungal infections by promoting neutrophil recruitment and antimicrobial peptides release. In synergy with IL17F, mediates the production of antimicrobial beta-defensins DEFB1, DEFB103A, and DEFB104A by mucosal epithelial cells, limiting the entry of microbes through the epithelial barriers. Involved in antiviral host defense through various mechanisms. This Rattus norvegicus (Rat) protein is Interleukin-17A (Il17a).